The sequence spans 229 residues: Cytidylate kinase (229 aa).

An ATP-binding site is contributed by 12 to 20 (GPSGSGKGT).

It belongs to the cytidylate kinase family. Type 1 subfamily.

Its subcellular location is the cytoplasm. The enzyme catalyses CMP + ATP = CDP + ADP. It catalyses the reaction dCMP + ATP = dCDP + ADP. This is Cytidylate kinase from Pseudomonas syringae pv. syringae (strain B728a).